The chain runs to 892 residues: Alanine--tRNA ligase (892 aa).

Zn(2+) contacts are provided by His-594, His-598, Cys-702, and His-706.

The protein belongs to the class-II aminoacyl-tRNA synthetase family. Requires Zn(2+) as cofactor.

The protein localises to the cytoplasm. It catalyses the reaction tRNA(Ala) + L-alanine + ATP = L-alanyl-tRNA(Ala) + AMP + diphosphate. In terms of biological role, catalyzes the attachment of alanine to tRNA(Ala) in a two-step reaction: alanine is first activated by ATP to form Ala-AMP and then transferred to the acceptor end of tRNA(Ala). Also edits incorrectly charged Ser-tRNA(Ala) and Gly-tRNA(Ala) via its editing domain. The chain is Alanine--tRNA ligase from Pyrobaculum neutrophilum (strain DSM 2338 / JCM 9278 / NBRC 100436 / V24Sta) (Thermoproteus neutrophilus).